The following is a 418-amino-acid chain: Voltage-gated ClC-type chloride channel ClcB (418 aa).

10 consecutive transmembrane segments (helical) span residues 5 to 25 (LLIA…FRHA), 54 to 74 (LLTP…WQKF), 146 to 166 (LWIA…PLAG), 168 to 188 (LFIA…PVII), 222 to 242 (ALII…LTLM), 258 to 278 (WQLA…PAVW), 291 to 311 (APPL…AVLA), 316 to 336 (GAPG…GMLY), 352 to 372 (LLLG…APIM), and 380 to 400 (MTGE…ASVI).

Belongs to the chloride channel (TC 2.A.49) family. ClcB subfamily.

The protein localises to the cell inner membrane. In terms of biological role, probably acts as an electrical shunt for an outwardly-directed proton pump that is linked to amino acid decarboxylation, as part of the extreme acid resistance (XAR) response. The polypeptide is Voltage-gated ClC-type chloride channel ClcB (Escherichia coli (strain ATCC 8739 / DSM 1576 / NBRC 3972 / NCIMB 8545 / WDCM 00012 / Crooks)).